A 644-amino-acid polypeptide reads, in one-letter code: Cell pattern formation-associated protein StuA (644 aa).

A compositionally biased stretch (low complexity) spans 18–33 (ATAHAPASAAPSGISH). 2 disordered regions span residues 18–58 (ATAH…PGYP) and 86–120 (QLPAMSSSGPSPSLSGAQSYAPHSFDHTGQVAPPG). Residues 38 to 47 (PQSSMMQPGQ) show a composition bias toward polar residues. Low complexity predominate over residues 87–104 (LPAMSSSGPSPSLSGAQS). In terms of domain architecture, HTH APSES-type spans 124–230 (RVTATLWEDE…HDIGALLYHP (107 aa)). The segment at residues 158–179 (GTKLLNVAGMTRGRRDGILKSE) is a DNA-binding region (H-T-H motif). The segment at 239–644 (GSAAMAAVDR…HTMTAQRARR (406 aa)) is disordered. Residues 253–269 (SMQTQRYISGPTTSQPP) are compositionally biased toward polar residues. A compositionally biased stretch (low complexity) spans 315–328 (SASSIMGMSNSGSS). Polar residues-rich tracts occupy residues 334–357 (ANVQTPQGSQPLSIDTGLSNTRSV), 371–383 (QAISYGSNQSYDN), and 395–404 (PGQYNTQGQS). Residues 456–465 (EGDHEHDNEY) show a composition bias toward basic and acidic residues. Residues 509–524 (GSGRATPRTTTTSQTQ) are compositionally biased toward low complexity. Over residues 525 to 544 (WNSGYPTPQRQGPPSSNLYN) the composition is skewed to polar residues. The nuclear localization domain stretch occupies residues 584–612 (KRGRDDDDEDPYRPDSVQSDDMGGLKRRK). The segment covering 635–644 (HTMTAQRARR) has biased composition (polar residues).

It belongs to the EFG1/PHD1/stuA family.

The protein localises to the nucleus. In terms of biological role, transcription factor that regulates asexual reproduction. Binds the StuA-response elements (StRE) with the consensus sequence 5'-(A/T)CGCG(T/A)N(A/C)-3' at the promoters of target genes. Required for pathogenicity and positively regulates the synthesis of the mycotoxin alternariol. Acts as a positive regulator of Tox3 but is not required for the expression of ToxA. Also acts as a central regulator of carbon metabolism including glycolysis, the TCA cycle, and amino acid synthesis. In Phaeosphaeria nodorum (strain SN15 / ATCC MYA-4574 / FGSC 10173) (Glume blotch fungus), this protein is Cell pattern formation-associated protein StuA.